A 526-amino-acid chain; its full sequence is Peptide chain release factor 3 (526 aa).

In terms of domain architecture, tr-type G spans 8–277 (NKRRTFAIIS…GLTEWAPKPQ (270 aa)). GTP-binding positions include 17-24 (SHPDAGKT), 85-89 (DTPGH), and 139-142 (NKLD).

This sequence belongs to the TRAFAC class translation factor GTPase superfamily. Classic translation factor GTPase family. PrfC subfamily.

The protein localises to the cytoplasm. In terms of biological role, increases the formation of ribosomal termination complexes and stimulates activities of RF-1 and RF-2. It binds guanine nucleotides and has strong preference for UGA stop codons. It may interact directly with the ribosome. The stimulation of RF-1 and RF-2 is significantly reduced by GTP and GDP, but not by GMP. This is Peptide chain release factor 3 from Haemophilus ducreyi (strain 35000HP / ATCC 700724).